A 394-amino-acid chain; its full sequence is Phosphopentomutase (394 aa).

Mn(2+)-binding residues include aspartate 15, aspartate 288, histidine 293, aspartate 329, histidine 330, and histidine 341.

This sequence belongs to the phosphopentomutase family. Mn(2+) is required as a cofactor.

Its subcellular location is the cytoplasm. It carries out the reaction 2-deoxy-alpha-D-ribose 1-phosphate = 2-deoxy-D-ribose 5-phosphate. The catalysed reaction is alpha-D-ribose 1-phosphate = D-ribose 5-phosphate. It functions in the pathway carbohydrate degradation; 2-deoxy-D-ribose 1-phosphate degradation; D-glyceraldehyde 3-phosphate and acetaldehyde from 2-deoxy-alpha-D-ribose 1-phosphate: step 1/2. Its function is as follows. Isomerase that catalyzes the conversion of deoxy-ribose 1-phosphate (dRib-1-P) and ribose 1-phosphate (Rib-1-P) to deoxy-ribose 5-phosphate (dRib-5-P) and ribose 5-phosphate (Rib-5-P), respectively. The polypeptide is Phosphopentomutase (drm) (Bacillus subtilis (strain 168)).